We begin with the raw amino-acid sequence, 165 residues long: NADPH-dependent 7-cyano-7-deazaguanine reductase (165 aa).

The Thioimide intermediate role is filled by Cys-56. The active-site Proton donor is the Asp-63. Substrate contacts are provided by residues 78-80 and 97-98; these read VES and HE.

It belongs to the GTP cyclohydrolase I family. QueF type 1 subfamily.

The protein resides in the cytoplasm. The enzyme catalyses 7-aminomethyl-7-carbaguanine + 2 NADP(+) = 7-cyano-7-deazaguanine + 2 NADPH + 3 H(+). The protein operates within tRNA modification; tRNA-queuosine biosynthesis. Its activity is regulated as follows. Is totally inhibited by 4-aminobenzylcyanide in vitro. In terms of biological role, catalyzes the NADPH-dependent reduction of 7-cyano-7-deazaguanine (preQ0) to 7-aminomethyl-7-deazaguanine (preQ1), a late step in the queuosine pathway. Is highly specific for its natural substrate preQ0, since it cannot use various aliphatic, aromatic and heterocyclic nitriles, although it can reduce the substrate analog 5-cyanopyrrolo[2,3-d]pyrimidin-4-one with lesser efficiency. The polypeptide is NADPH-dependent 7-cyano-7-deazaguanine reductase (Geobacillus kaustophilus (strain HTA426)).